The chain runs to 176 residues: ATP-dependent protease subunit HslV (176 aa).

Thr-2 is a catalytic residue. Residues Gly-157, Cys-160, and Thr-163 each coordinate Na(+).

It belongs to the peptidase T1B family. HslV subfamily. A double ring-shaped homohexamer of HslV is capped on each side by a ring-shaped HslU homohexamer. The assembly of the HslU/HslV complex is dependent on binding of ATP.

The protein localises to the cytoplasm. It catalyses the reaction ATP-dependent cleavage of peptide bonds with broad specificity.. Its activity is regulated as follows. Allosterically activated by HslU binding. Its function is as follows. Protease subunit of a proteasome-like degradation complex believed to be a general protein degrading machinery. The polypeptide is ATP-dependent protease subunit HslV (Escherichia coli O139:H28 (strain E24377A / ETEC)).